The sequence spans 335 residues: uncharacterized protein (335 aa).

2 disordered regions span residues 152-179 and 252-271; these read IQLPDRMPKTTNGTLADPNMPPKTTVND and LDLFGSPSSENKSTAGSASL. 2 positions are modified to phosphoserine: serine 257 and serine 260. The span at 257–271 shows a compositional bias: polar residues; it reads SPSSENKSTAGSASL.

This is an uncharacterized protein from Schizosaccharomyces pombe (strain 972 / ATCC 24843) (Fission yeast).